The chain runs to 513 residues: Tigger transposable element-derived protein 4 (513 aa).

Positions 12-63 (PVTVKKKKSLSIEEKIDIINAVESGKKKAEIAAEYGIKKNSLSSIMKNKDKV) constitute an HTH psq-type domain. 2 consecutive DNA-binding regions (H-T-H motif) follow at residues 39-59 (KAEI…IMKN) and 108-139 (PMLR…FKSR). The region spanning 75–146 (KRKRLRTAFY…KSRYGLVFRA (72 aa)) is the HTH CENPB-type domain. The DDE-1 domain maps to 174–375 (YHPKNVFNVK…VTPETIVKSY (202 aa)). Basic and acidic residues predominate over residues 433–448 (TQKDDAEWAGESKQDE). The interval 433–473 (TQKDDAEWAGESKQDETGLYTSDEEEEDSGALEVDLPSPSK) is disordered.

Belongs to the tigger transposable element derived protein family.

The protein resides in the nucleus. This Mus musculus (Mouse) protein is Tigger transposable element-derived protein 4 (Tigd4).